A 114-amino-acid polypeptide reads, in one-letter code: MQLVLMAAVLALAEVGCFGCHLKNVSIPMERCGQRVCIHTTICEGLCFSEDAVFESPDEAPEHRVCNGDWSYEVKHIQGCPESITYPVATNCYCSACNTKDTYCTRLYAHIPSC.

A signal peptide spans 1–19 (MQLVLMAAVLALAEVGCFG). 6 cysteine pairs are disulfide-bonded: C20–C66, C32–C80, C37–C114, C43–C92, C47–C94, and C97–C104. N-linked (GlcNAc...) asparagine glycosylation is present at N24.

Belongs to the glycoprotein hormones subunit beta family. In terms of assembly, heterodimer of an alpha and a beta chain.

It is found in the secreted. Functionally, involved in gametogenesis and steroidogenesis. In Fundulus heteroclitus (Killifish), this protein is Gonadotropin subunit beta-1 (cgba).